A 443-amino-acid polypeptide reads, in one-letter code: Amino-acid acetyltransferase (443 aa).

The N-acetyltransferase domain maps to 296–436; the sequence is EQIRRATIND…KMYNYQRRSK (141 aa).

This sequence belongs to the acetyltransferase family. ArgA subfamily. Homohexamer.

The protein localises to the cytoplasm. It catalyses the reaction L-glutamate + acetyl-CoA = N-acetyl-L-glutamate + CoA + H(+). It functions in the pathway amino-acid biosynthesis; L-arginine biosynthesis; N(2)-acetyl-L-ornithine from L-glutamate: step 1/4. The polypeptide is Amino-acid acetyltransferase (Salmonella arizonae (strain ATCC BAA-731 / CDC346-86 / RSK2980)).